Reading from the N-terminus, the 136-residue chain is Putative pre-16S rRNA nuclease (136 aa).

It belongs to the YqgF nuclease family.

The protein resides in the cytoplasm. Its function is as follows. Could be a nuclease involved in processing of the 5'-end of pre-16S rRNA. This is Putative pre-16S rRNA nuclease from Francisella tularensis subsp. novicida (strain U112).